A 324-amino-acid polypeptide reads, in one-letter code: D-alanine--D-alanine ligase (324 aa).

An ATP-grasp domain is found at 112 to 312 (KAVLAAAGVT…FDQLVLWIVE (201 aa)). 139-193 (LQPPYVVKPNAEGSSVGVFIIKEGANRPPEEVGAPSWTFGEEVMVEPYIQGMELA) is a binding site for ATP. D265, E279, and N281 together coordinate Mg(2+).

It belongs to the D-alanine--D-alanine ligase family. Mg(2+) serves as cofactor. It depends on Mn(2+) as a cofactor.

It localises to the cytoplasm. The catalysed reaction is 2 D-alanine + ATP = D-alanyl-D-alanine + ADP + phosphate + H(+). It participates in cell wall biogenesis; peptidoglycan biosynthesis. Cell wall formation. The sequence is that of D-alanine--D-alanine ligase from Caulobacter vibrioides (strain ATCC 19089 / CIP 103742 / CB 15) (Caulobacter crescentus).